The primary structure comprises 378 residues: Stimulator of interferon genes protein (378 aa).

Topologically, residues 1–17 (MPYSSLHPSIPQPRGLR) are cytoplasmic. A mediates interaction with ZDHHC1 and ZDHHC11 region spans residues 1 to 190 (MPYSSLHPSI…AYNQRHKNVL (190 aa)). A helical transmembrane segment spans residues 18–34 (AQVAALVLLGACLVALW). Residues 35–44 (GLGELPEYTL) are Lumenal-facing. The chain crosses the membrane as a helical span at residues 45–69 (RWLVLHLASQQIGLLVKGLCSLAEE). The Cytoplasmic portion of the chain corresponds to 70–91 (LCHVHSRYQSSYWRAARACLGC). 2 S-palmitoyl cysteine lipidation sites follow: Cys88 and Cys91. The helical transmembrane segment at 92–106 (PIRCGALLLLSCYFY) threads the bilayer. At 107 to 116 (FSIRDKAGLP) the chain is on the lumenal side. The helical transmembrane segment at 117-134 (LPWMLALLGLSQALNILL) threads the bilayer. Over 135–378 (GLQHLAPAEV…QPLPLRSDIF (244 aa)) the chain is Cytoplasmic. Lys150 is covalently cross-linked (Glycyl lysine isopeptide (Lys-Gly) (interchain with G-Cter in ubiquitin)). Positions 153–339 (FNVAHGLAWS…LRHLRQEERE (187 aa)) are cyclic dinucleotide-binding domain (CBD). 2',3'-cGAMP contacts are provided by Ser162 and Tyr167. Residues Ser162 and Tyr167 each coordinate 3',3'-c-di-GMP. Residue Tyr167 participates in 2',3'-cUAMP binding. A Glycyl lysine isopeptide (Lys-Gly) (interchain with G-Cter in ubiquitin) cross-link involves residue Lys236. Positions 238 and 263 each coordinate 2',3'-cGAMP. Positions 238 and 263 each coordinate 2',3'-cUAMP. 3',3'-c-di-GMP-binding positions include 238 to 241 (RVYT) and Thr263. Residues 339-378 (EVTMGSAETSVVPTSSTLSQEPELLISGMEQPLPLRSDIF) are C-terminal tail (CTT). Position 354 is a phosphoserine (Ser354). Thr355 bears the Phosphothreonine mark. A phosphoserine; by TBK1 mark is found at Ser357 and Ser365. Residues 362–365 (LLIS) carry the pLxIS motif motif.

The protein belongs to the STING family. In terms of assembly, homodimer; forms a homodimer in absence of cyclic nucleotide (c-di-GMP or cGAMP); 'Lys-63'-linked ubiquitination at Lys-150 is required for homodimerization. Homotetramer; in presence of cyclic nucleotide (c-di-GMP or cGAMP), forms tetramers and higher-order oligomers through side-by-side packing. Interacts (when phosphorylated) with IRF3; following activation and phosphorylation on the pLxIS motif by TBK1, recruits IRF3. Interacts with DDX58/RIG-I, MAVS and SSR2. Interacts with RNF5 and TRIM56. Interacts with TBK1; when homodimer, leading to subsequent production of IFN-beta. Interacts with IFIT1 and IFIT2. Interacts with TRIM29; this interaction induces STING1 ubiquitination and subsequent degradation. Associates with the MHC-II complex. Interacts with STEEP1; interaction takes place upon cGAMP-activation and STING1 phosphorylation by MAP3K7/TAK1 and promotes STING1 translocation to COPII vesicles. Interacts with SEC24A, SEC24B and SEC24C; promoting translocation to COPII vesicles. Interacts (when ubiquitinated) with SQSTM1; leading to relocalization to autophagosomes. Interacts with SURF4. Interacts with HNRNPA2B1. Interacts with ZDHHC1; ZDHHC1 constitutively interacts with STING1 and in presence of DNA viruses activates it by promoting its cGAMP-induced oligomerization and the recruitment of downstream signaling components. Interacts with ZDHHC11; in presence of DNA viruses promotes the recruitment of IRF3 to STING1. Interacts with TOMM70. Interacts with TAB1; promoting recruitment of TAB1 to the endoplasmic reticulum membrane and subsequent activation of MAP3K7/TAK1. Interacts (via transmembrane domain) with TMEM203. Interacts with DDX41. (Microbial infection) Interacts with African swine fever virus/ASFV protein A528R; this interaction mediates STING1 degradation. As to quaternary structure, (Microbial infection) Interacts with African swine fever virus/ASFV minor capsid protein p17. In terms of assembly, (Microbial infection) Interacts with Pseudorabies virus protein UL13; this interaction mediates STING1 degradation in a RNF5-dependent manner. In terms of processing, phosphorylation by TBK1 leads to activation and production of IFN-beta. Following cyclic nucleotide (c-di-GMP or cGAMP)-binding, activation and translocation from the endoplasmic reticulum, STING1 is phosphorylated by TBK1 at Ser-365 in the pLxIS motif. The phosphorylated pLxIS motif constitutes an IRF3-binding motif, leading to recruitment of the transcription factor IRF3 to induce type-I interferons and other cytokines. Phosphorylated on tyrosine residues upon MHC-II aggregation. Dephosphorylation by PPP6C leads to inactivation and decreased production of IFN-beta. Phosphorylation at Ser-357 is also required to activate IRF3. Phosphorylation at Ser-354 by MAP3K7/TAK1 facilitates its interaction with STEEP1, promoting STING1 translocation to COPII vesicles. Ubiquitinated. Ubiquitinated via 'Lys-63'-linked ubiquitin chains in response to double-stranded DNA treatment, leading to relocalization to autophagosomes and subsequent degradation; this process is dependent on SQSTM1. 'Lys-63'-linked ubiquitination mediated by TRIM56 at Lys-150 promotes homodimerization and recruitment of the antiviral kinase TBK1 and subsequent production of IFN-beta. 'Lys-48'-linked polyubiquitination at Lys-150 occurring after viral infection is mediated by RNF5 and leads to proteasomal degradation. 'Lys-11'-linked polyubiquitination at Lys-150 by RNF26 leads to stabilize STING1: it protects STING1 from RNF5-mediated 'Lys-48'-linked polyubiquitination. 'Lys-33'-linked and 'Lys-48'-linked deubiquitinated by USP20; leading to its stabilization and promotion of innate antiviral response. 'Lys-48'-linked deubiquitinated by USP44; leading to its stabilization and promotion of innate antiviral response. Deubiquitinated by USP13; leading to inhibition of innate antiviral response. 'Lys-63'-linked deubiquitinated by USP49; leading to inhibition of the subsequent recruitment of TBK1 to the signaling complex. 'Lys-63'-linked ubiquitination mediated by RNF39 promotes the activation of the cGAS-STING pathway. Post-translationally, palmitoylation takes place in the Golgi apparatus and creates a platform for the recruitment of TBK1. As to expression, expressed at higher level in the spleen, lymph node, lung and bone marrow, followed by the small intestine, heart, liver and brain, and to a lesser extent in the stomach and kidney.

It localises to the endoplasmic reticulum membrane. Its subcellular location is the cytoplasm. The protein resides in the perinuclear region. The protein localises to the endoplasmic reticulum-Golgi intermediate compartment membrane. It is found in the golgi apparatus membrane. It localises to the cytoplasmic vesicle. Its subcellular location is the autophagosome membrane. The protein resides in the mitochondrion outer membrane. The protein localises to the cell membrane. It carries out the reaction H(+)(in) = H(+)(out). Functionally, facilitator of innate immune signaling that acts as a sensor of cytosolic DNA from bacteria and viruses and promotes the production of type I interferon (IFN-alpha and IFN-beta). Innate immune response is triggered in response to non-CpG double-stranded DNA from viruses and bacteria delivered to the cytoplasm. Acts by binding cyclic dinucleotides: recognizes and binds cyclic di-GMP (c-di-GMP), a second messenger produced by bacteria, cyclic UMP-AMP (2',3'-cUAMP), and cyclic GMP-AMP (cGAMP), a messenger produced by CGAS in response to DNA virus in the cytosol. Upon binding to c-di-GMP, cUAMP or cGAMP, STING1 oligomerizes, translocates from the endoplasmic reticulum and is phosphorylated by TBK1 on the pLxIS motif, leading to recruitment and subsequent activation of the transcription factor IRF3 to induce expression of type I interferon and exert a potent anti-viral state. Exhibits 2',3' phosphodiester linkage-specific ligand recognition: can bind both 2'-3' linked cGAMP (2'-3'-cGAMP) and 3'-3' linked cGAMP but is preferentially activated by 2'-3' linked cGAMP. The preference for 2'-3'-cGAMP, compared to other linkage isomers is probably due to the ligand itself, whichs adopts an organized free-ligand conformation that resembles the STING1-bound conformation and pays low energy costs in changing into the active conformation. In addition to promote the production of type I interferons, plays a direct role in autophagy. Following cGAMP-binding, STING1 buds from the endoplasmic reticulum into COPII vesicles, which then form the endoplasmic reticulum-Golgi intermediate compartment (ERGIC). The ERGIC serves as the membrane source for WIPI2 recruitment and LC3 lipidation, leading to formation of autophagosomes that target cytosolic DNA or DNA viruses for degradation by the lysosome. Promotes autophagy by acting as a proton channel that directs proton efflux from the Golgi to facilitate MAP1LC3B/LC3B lipidation. The autophagy- and interferon-inducing activities can be uncoupled and autophagy induction is independent of TBK1 phosphorylation. Autophagy is also triggered upon infection by bacteria: following c-di-GMP-binding, which is produced by live Gram-positive bacteria, promotes reticulophagy. May be involved in translocon function, the translocon possibly being able to influence the induction of type I interferons. May be involved in transduction of apoptotic signals via its association with the major histocompatibility complex class II (MHC-II). This chain is Stimulator of interferon genes protein, found in Sus scrofa (Pig).